A 266-amino-acid polypeptide reads, in one-letter code: Gasdermin bGSDM (266 aa).

A lipid anchor (S-palmitoyl cysteine) is attached at cysteine 3. A run of 4 beta stranded transmembrane segments spans residues 69 to 85 (ISGQ…GLSI), 97 to 115 (KLGL…FEFQ), 163 to 180 (KFTI…ELTI), and 189 to 205 (GNVK…KICY).

The protein belongs to the bacterial gasdermin family. Monomer. As to quaternary structure, forms large, homooligomeric ring-shaped pores when inserted in membranes. Palmitoylation helps stabilize the inactive state; may self palmitoylate. Palmitoylation plays a significant role in pore formation.

The protein localises to the cytoplasm. Its subcellular location is the cell inner membrane. The full-length protein before cleavage is inactive: intramolecular interactions between the N-terminal domain and the C-terminal region as well as the lipid modification, mediate autoinhibition. The pyroptosis-like-inducing activity is carried by the released N-terminal domain (Gasdermin bGSDM, N-terminus). Its function is as follows. Precursor of a pore-forming protein involved in defense against bacteriophages. Expression of bGSDM and the neighboring protease gene (Ga0182885_104520) is toxic in E.coli. Cleavage of this precursor by its dedicated protease releases the active moiety (gasdermin bGSDM, N-terminus) which inserts into membranes, forming pores and triggering cell death. In terms of biological role, pore-forming protein that causes membrane permeabilization via a pyroptosis-like activity. Makes ring-like pores when released. This Desulfuromonadales bacterium protein is Gasdermin bGSDM.